A 420-amino-acid polypeptide reads, in one-letter code: Acetyl-CoA acetyltransferase, mitochondrial (420 aa).

The transit peptide at 1 to 26 directs the protein to the mitochondrion; that stretch reads MTSRALYSTRSQLCRHLAHKYLSRSY. C119 acts as the Acyl-thioester intermediate in catalysis. CoA is bound by residues Y212, 251–253, and K256; that span reads KVD. Y212 serves as a coordination point for K(+). Residues A273, A274, and A276 each contribute to the K(+) site. S277 lines the CoA pocket. Residue V374 participates in K(+) binding. The Proton donor/acceptor role is filled by C406.

Belongs to the thiolase-like superfamily. Thiolase family. Homotetramer.

It is found in the mitochondrion. The catalysed reaction is 2 acetyl-CoA = acetoacetyl-CoA + CoA. It carries out the reaction propanoyl-CoA + acetyl-CoA = 2-methyl-3-oxobutanoyl-CoA + CoA. It participates in lipid metabolism; fatty acid beta-oxidation. Functionally, this is one of the enzymes that catalyzes the last step of the mitochondrial beta-oxidation pathway, an aerobic process breaking down fatty acids into acetyl-CoA. Using free coenzyme A/CoA, catalyzes the thiolytic cleavage of medium- to long-chain 3-oxoacyl-CoAs into acetyl-CoA and a fatty acyl-CoA shortened by two carbon atoms. The activity of the enzyme is reversible and it can also catalyze the condensation of two acetyl-CoA molecules into acetoacetyl-CoA. Thereby, it plays a major role in ketone body metabolism. This Danio rerio (Zebrafish) protein is Acetyl-CoA acetyltransferase, mitochondrial (acat1).